Here is a 179-residue protein sequence, read N- to C-terminus: Peptide deformylase (179 aa).

Cys102 and His144 together coordinate Fe cation. Glu145 is a catalytic residue. His148 contributes to the Fe cation binding site.

The protein belongs to the polypeptide deformylase family. The cofactor is Fe(2+).

It catalyses the reaction N-terminal N-formyl-L-methionyl-[peptide] + H2O = N-terminal L-methionyl-[peptide] + formate. Functionally, removes the formyl group from the N-terminal Met of newly synthesized proteins. Requires at least a dipeptide for an efficient rate of reaction. N-terminal L-methionine is a prerequisite for activity but the enzyme has broad specificity at other positions. This chain is Peptide deformylase, found in Wolbachia pipientis wMel.